Here is a 434-residue protein sequence, read N- to C-terminus: Chaperone SurA (434 aa).

The signal sequence occupies residues 1 to 22; it reads MKHSKKIVTALLALAMSQTVMA. 2 PpiC domains span residues 173–274 and 283–383; these read EVEF…KVMD and VEEV…QLMD.

Its subcellular location is the periplasm. The enzyme catalyses [protein]-peptidylproline (omega=180) = [protein]-peptidylproline (omega=0). Functionally, chaperone involved in the correct folding and assembly of outer membrane proteins. Recognizes specific patterns of aromatic residues and the orientation of their side chains, which are found more frequently in integral outer membrane proteins. May act in both early periplasmic and late outer membrane-associated steps of protein maturation. The sequence is that of Chaperone SurA from Shewanella denitrificans (strain OS217 / ATCC BAA-1090 / DSM 15013).